The following is a 212-amino-acid chain: Protein-L-isoaspartate O-methyltransferase 1 (212 aa).

The active site involves S60.

This sequence belongs to the methyltransferase superfamily. L-isoaspartyl/D-aspartyl protein methyltransferase family.

It is found in the cytoplasm. It catalyses the reaction [protein]-L-isoaspartate + S-adenosyl-L-methionine = [protein]-L-isoaspartate alpha-methyl ester + S-adenosyl-L-homocysteine. In terms of biological role, catalyzes the methyl esterification of L-isoaspartyl residues in peptides and proteins that result from spontaneous decomposition of normal L-aspartyl and L-asparaginyl residues. It plays a role in the repair and/or degradation of damaged proteins. In Anaeromyxobacter sp. (strain Fw109-5), this protein is Protein-L-isoaspartate O-methyltransferase 1.